Reading from the N-terminus, the 97-residue chain is Co-chaperonin GroES (97 aa).

This sequence belongs to the GroES chaperonin family. In terms of assembly, heptamer of 7 subunits arranged in a ring. Interacts with the chaperonin GroEL.

It localises to the cytoplasm. Its function is as follows. Together with the chaperonin GroEL, plays an essential role in assisting protein folding. The GroEL-GroES system forms a nano-cage that allows encapsulation of the non-native substrate proteins and provides a physical environment optimized to promote and accelerate protein folding. GroES binds to the apical surface of the GroEL ring, thereby capping the opening of the GroEL channel. The sequence is that of Co-chaperonin GroES from Stenotrophomonas maltophilia (Pseudomonas maltophilia).